A 438-amino-acid polypeptide reads, in one-letter code: Trigger factor (438 aa).

Residues 162-247 enclose the PPIase FKBP-type domain; the sequence is GDRVNINYQG…LNKVEAPKLP (86 aa).

This sequence belongs to the FKBP-type PPIase family. Tig subfamily.

It localises to the cytoplasm. It carries out the reaction [protein]-peptidylproline (omega=180) = [protein]-peptidylproline (omega=0). In terms of biological role, involved in protein export. Acts as a chaperone by maintaining the newly synthesized protein in an open conformation. Functions as a peptidyl-prolyl cis-trans isomerase. This is Trigger factor from Nitrosomonas eutropha (strain DSM 101675 / C91 / Nm57).